The primary structure comprises 395 residues: Nicotinate phosphoribosyltransferase (395 aa).

H222 bears the Phosphohistidine; by autocatalysis mark.

Belongs to the NAPRTase family. Post-translationally, transiently phosphorylated on a His residue during the reaction cycle. Phosphorylation strongly increases the affinity for substrates and increases the rate of nicotinate D-ribonucleotide production. Dephosphorylation regenerates the low-affinity form of the enzyme, leading to product release.

It catalyses the reaction nicotinate + 5-phospho-alpha-D-ribose 1-diphosphate + ATP + H2O = nicotinate beta-D-ribonucleotide + ADP + phosphate + diphosphate. It functions in the pathway cofactor biosynthesis; NAD(+) biosynthesis; nicotinate D-ribonucleotide from nicotinate: step 1/1. Catalyzes the synthesis of beta-nicotinate D-ribonucleotide from nicotinate and 5-phospho-D-ribose 1-phosphate at the expense of ATP. This chain is Nicotinate phosphoribosyltransferase, found in Polaromonas sp. (strain JS666 / ATCC BAA-500).